The chain runs to 253 residues: UDP-Glc:alpha-D-GlcNAc-diphosphoundecaprenol beta-1,3-glucosyltransferase WfgD (253 aa).

It belongs to the glycosyltransferase 2 family. Requires Mn(2+) as cofactor. Mg(2+) serves as cofactor.

It localises to the cell inner membrane. The catalysed reaction is N-acetyl-alpha-D-glucosaminyl-di-trans,octa-cis-undecaprenyl diphosphate + UDP-alpha-D-glucose = beta-D-Glc-(1-&gt;3)-alpha-D-GlcNAc-di-trans,octa-cis-undecaprenyl diphosphate + UDP + H(+). The protein operates within bacterial outer membrane biogenesis; lipopolysaccharide biosynthesis. Its function is as follows. Catalyzes the addition of Glc, the second sugar moiety of the O152-antigen repeating unit, to GlcNAc-pyrophosphate-undecaprenol. The protein is UDP-Glc:alpha-D-GlcNAc-diphosphoundecaprenol beta-1,3-glucosyltransferase WfgD (wfgD) of Escherichia coli.